The following is a 793-amino-acid chain: Probable phosphoketolase 2 (793 aa).

It belongs to the XFP family. It depends on thiamine diphosphate as a cofactor.

The chain is Probable phosphoketolase 2 from Nostoc sp. (strain PCC 7120 / SAG 25.82 / UTEX 2576).